The chain runs to 292 residues: 33 kDa chaperonin (292 aa).

2 disulfide bridges follow: Cys230–Cys232 and Cys263–Cys266.

Belongs to the HSP33 family. In terms of processing, under oxidizing conditions two disulfide bonds are formed involving the reactive cysteines. Under reducing conditions zinc is bound to the reactive cysteines and the protein is inactive.

The protein resides in the cytoplasm. Its function is as follows. Redox regulated molecular chaperone. Protects both thermally unfolding and oxidatively damaged proteins from irreversible aggregation. Plays an important role in the bacterial defense system toward oxidative stress. The sequence is that of 33 kDa chaperonin from Escherichia coli O17:K52:H18 (strain UMN026 / ExPEC).